The sequence spans 374 residues: GPN-loop GTPase 1 (374 aa).

A2 is subject to N-acetylalanine. GTP is bound at residue 29–34; that stretch reads GSGKTT. Positions 86–88 match the Gly-Pro-Asn (GPN)-loop; involved in dimer interface motif; sequence GPN. 189 to 192 is a GTP binding site; that stretch reads NKTD. 3 positions are modified to phosphoserine: S301, S312, and S314. Residues 326 to 354 are disordered; the sequence is RGTLDEEDEEADSDTDDIDHRVTEESHEE. Phosphothreonine is present on T328. Over residues 330 to 342 the composition is skewed to acidic residues; it reads DEEDEEADSDTDD. S338 is subject to Phosphoserine. Phosphothreonine is present on T340. Residues 343-354 show a composition bias toward basic and acidic residues; sequence IDHRVTEESHEE.

This sequence belongs to the GPN-loop GTPase family. As to quaternary structure, heterodimer with GPN3. Binds to RNA polymerase II (RNAPII). Interacts directly with RNAPII subunits RPB4 and RPB7 and the CTD of RPB1. Interacts with XPA. In terms of tissue distribution, expressed ubiquitously.

Its subcellular location is the cytoplasm. The protein resides in the nucleus. Functionally, small GTPase required for proper nuclear import of RNA polymerase II (RNAPII). May act at an RNAP assembly step prior to nuclear import. Forms an interface between the RNA polymerase II enzyme and chaperone/scaffolding proteins, suggesting that it is required to connect RNA polymerase II to regulators of protein complex formation. May be involved in nuclear localization of XPA. This Homo sapiens (Human) protein is GPN-loop GTPase 1.